The chain runs to 365 residues: DNA polymerase IV (365 aa).

The UmuC domain maps to 14 to 198 (IIHIDMDAFF…LPIEKFHGVG (185 aa)). Asp18 and Asp116 together coordinate Mg(2+). The active site involves Glu117.

The protein belongs to the DNA polymerase type-Y family. As to quaternary structure, monomer. Requires Mg(2+) as cofactor.

It localises to the cytoplasm. The enzyme catalyses DNA(n) + a 2'-deoxyribonucleoside 5'-triphosphate = DNA(n+1) + diphosphate. Poorly processive, error-prone DNA polymerase involved in untargeted mutagenesis. Copies undamaged DNA at stalled replication forks, which arise in vivo from mismatched or misaligned primer ends. These misaligned primers can be extended by PolIV. Exhibits no 3'-5' exonuclease (proofreading) activity. May be involved in translesional synthesis, in conjunction with the beta clamp from PolIII. In Streptococcus pyogenes serotype M3 (strain ATCC BAA-595 / MGAS315), this protein is DNA polymerase IV.